The sequence spans 2327 residues: Acetyl-CoA carboxylase 2 (2327 aa).

A disordered region spans residues 1–62; it reads MTSTHVATLG…NGGVSDSKKL (62 aa). A Biotin carboxylation domain is found at 134–641; sequence PIHSVLVANN…HTGWLDTRIA (508 aa). The 195-residue stretch at 287-481 folds into the ATP-grasp domain; sequence ECCLDSIPDE…AAQVAVGMGI (195 aa). Position 313-370 (313-370) interacts with ATP; it reads CQVVGYPAMIKASWGGGGKGIRKVHNDDEVRTLFKQVQGEVPGSPIFIMRLAAQSRHL. 3 residues coordinate Mg(2+): Glu-436, Glu-450, and Asn-452. Residues Glu-436, Glu-450, and Asn-452 each coordinate Mn(2+). Residue Arg-454 is part of the active site. The Biotinyl-binding domain occupies 768–842; that stretch reads LQNDHDPSKL…QAGDLIARLD (75 aa). N6-biotinyllysine is present on Lys-809. The CoA carboxyltransferase N-terminal domain maps to 1568 to 1909; it reads PYQPLSVIDL…YIGGPLPVTT (342 aa). The interval 1568 to 2227 is carboxyltransferase; the sequence is PYQPLSVIDL…EDVLAKEIRA (660 aa). Residues Arg-1818, Lys-2119, and Arg-2121 each contribute to the CoA site. One can recognise a CoA carboxyltransferase C-terminal domain in the interval 1913–2227; it reads PPDRPVAYIP…EDVLAKEIRA (315 aa).

Homodimer. Biotin is required as a cofactor. The cofactor is Mg(2+). Requires Mn(2+) as cofactor.

The protein localises to the cytoplasm. The protein resides in the cytosol. The enzyme catalyses hydrogencarbonate + acetyl-CoA + ATP = malonyl-CoA + ADP + phosphate + H(+). It catalyses the reaction N(6)-biotinyl-L-lysyl-[protein] + hydrogencarbonate + ATP = N(6)-carboxybiotinyl-L-lysyl-[protein] + ADP + phosphate + H(+). Its pathway is lipid metabolism; malonyl-CoA biosynthesis; malonyl-CoA from acetyl-CoA: step 1/1. Functionally, multifunctional enzyme that catalyzes the carboxylation of acetyl-CoA, forming malonyl-CoA, which is used in the plastid for fatty acid synthesis and in the cytosol in various biosynthetic pathways including fatty acid elongation. The chain is Acetyl-CoA carboxylase 2 (ACC2) from Oryza sativa subsp. japonica (Rice).